Reading from the N-terminus, the 562-residue chain is Arginine--tRNA ligase 2 (562 aa).

A 'HIGH' region motif is present at residues 122-132; sequence PNIAKPFSMGH.

The protein belongs to the class-I aminoacyl-tRNA synthetase family. In terms of assembly, monomer.

The protein resides in the cytoplasm. It catalyses the reaction tRNA(Arg) + L-arginine + ATP = L-arginyl-tRNA(Arg) + AMP + diphosphate. The protein is Arginine--tRNA ligase 2 (argS2) of Bacillus anthracis.